Here is a 311-residue protein sequence, read N- to C-terminus: Malate dehydrogenase (311 aa).

NAD(+) contacts are provided by residues 7–13 (GAAGGIG) and Asp-34. The substrate site is built by Arg-81 and Arg-87. Residues Asn-94 and 117–119 (ITN) each bind NAD(+). Asn-119 and Arg-153 together coordinate substrate. The Proton acceptor role is filled by His-177. Residue Met-227 coordinates NAD(+).

The protein belongs to the LDH/MDH superfamily. MDH type 1 family. Homodimer.

It carries out the reaction (S)-malate + NAD(+) = oxaloacetate + NADH + H(+). In terms of biological role, catalyzes the reversible oxidation of malate to oxaloacetate. In Shewanella sp. (strain ANA-3), this protein is Malate dehydrogenase.